A 288-amino-acid chain; its full sequence is Polyamine aminopropyltransferase (288 aa).

Positions 9-238 constitute a PABS domain; the sequence is ETLHDQFGQY…GIMTFAWATD (230 aa). An S-methyl-5'-thioadenosine-binding site is contributed by Gln33. 2 residues coordinate spermidine: His64 and Asp88. S-methyl-5'-thioadenosine-binding positions include Glu108 and 140-141; that span reads DG. Catalysis depends on Asp158, which acts as the Proton acceptor. 158–161 contributes to the spermidine binding site; that stretch reads DCTD. Pro165 is a binding site for S-methyl-5'-thioadenosine.

Belongs to the spermidine/spermine synthase family. In terms of assembly, homodimer or homotetramer.

The protein localises to the cytoplasm. The enzyme catalyses S-adenosyl 3-(methylsulfanyl)propylamine + putrescine = S-methyl-5'-thioadenosine + spermidine + H(+). The protein operates within amine and polyamine biosynthesis; spermidine biosynthesis; spermidine from putrescine: step 1/1. In terms of biological role, catalyzes the irreversible transfer of a propylamine group from the amino donor S-adenosylmethioninamine (decarboxy-AdoMet) to putrescine (1,4-diaminobutane) to yield spermidine. The protein is Polyamine aminopropyltransferase of Shigella flexneri serotype 5b (strain 8401).